A 339-amino-acid chain; its full sequence is Protein H339R (339 aa).

This sequence belongs to the asfivirus H339R family. As to quaternary structure, interacts with host NACA (alpha chain of nascent polypeptide-associated complex).

Its subcellular location is the host cytoplasm. It localises to the host nucleus. The sequence is that of Protein H339R from African swine fever virus (isolate Tick/South Africa/Pretoriuskop Pr4/1996) (ASFV).